We begin with the raw amino-acid sequence, 148 residues long: Endoribonuclease YbeY (148 aa).

Zn(2+) is bound by residues histidine 113, histidine 117, and histidine 123.

It belongs to the endoribonuclease YbeY family. The cofactor is Zn(2+).

Its subcellular location is the cytoplasm. In terms of biological role, single strand-specific metallo-endoribonuclease involved in late-stage 70S ribosome quality control and in maturation of the 3' terminus of the 16S rRNA. In Borrelia duttonii (strain Ly), this protein is Endoribonuclease YbeY.